Consider the following 236-residue polypeptide: Peroxisomal membrane protein 11D (236 aa).

Position 2 is an N-acetylglycine (Gly-2). Topologically, residues 2-92 (GTTLDVSRAE…LPLVLLGKSK (91 aa)) are cytoplasmic. The helical transmembrane segment at 93 to 109 (NALLSTFLFLDQIVWLG) threads the bilayer. At 110–207 (RSGIYKNKER…LLQLAPTKIT (98 aa)) the chain is on the lumenal side. A helical membrane pass occupies residues 208-227 (PRVTGAFGFITSIISCYQLL). Residues 228–236 (PTRPKIKTP) lie on the Cytoplasmic side of the membrane.

It belongs to the peroxin-11 family. In terms of assembly, homooligomer. Interacts with ARC5 and FIS1B on peroxisomes. As to expression, expressed in developing siliques.

It localises to the peroxisome membrane. In terms of biological role, involved in peroxisomal proliferation. Promotes peroxisomal duplication, aggregation or elongation without fission. In Arabidopsis thaliana (Mouse-ear cress), this protein is Peroxisomal membrane protein 11D (PEX11D).